We begin with the raw amino-acid sequence, 623 residues long: Lethal(3)malignant brain tumor-like protein 4 (623 aa).

Residues 1–44 (MKQPNRKRKLNMDSKERLDQDGRLEQAEEEKKPKDSTTPLSHVP) form a disordered region. The span at 10 to 35 (LNMDSKERLDQDGRLEQAEEEKKPKD) shows a compositional bias: basic and acidic residues. MBT repeat units follow at residues 52–152 (WSWE…LHIP), 160–260 (FVWM…LIAP), and 269–364 (FSWT…LEVP). A CCHHC-type zinc finger spans residues 370–414 (LKILPGQAVCPTPGCRGIGHIRGPRYSGHHSAFGCPYSDMNLKKE). Zn(2+) contacts are provided by Cys379, Cys384, His398, and Cys404. The SAM domain maps to 543-607 (WTVDEVAEFV…YNSILMFRHS (65 aa)).

It is found in the nucleus. Its function is as follows. Putative Polycomb group (PcG) protein. PcG proteins maintain the transcriptionally repressive state of genes, probably via a modification of chromatin, rendering it heritably changed in its expressibility. The polypeptide is Lethal(3)malignant brain tumor-like protein 4 (L3MBTL4) (Homo sapiens (Human)).